The sequence spans 153 residues: MVNEYKAHSSFILKVVITLIGYWIASILAIIIYSMFFKIETNTFLLCLLLPTPIIWFNILIGMGLTYRCMENLTIYDKHKLWCVFVRDLTLTILATILATLTTMELYQIEHPLKPIEFVFIVGLVLIVGFTIITTLIIKYLKIIKNLKKISKN.

Helical transmembrane passes span Ile17–Phe37, Phe44–Gly64, and Phe118–Ile138.

This sequence to M.jannaschii MJ0129 and MJ0554.

Its subcellular location is the cell membrane. This is an uncharacterized protein from Methanocaldococcus jannaschii (strain ATCC 43067 / DSM 2661 / JAL-1 / JCM 10045 / NBRC 100440) (Methanococcus jannaschii).